We begin with the raw amino-acid sequence, 103 residues long: Iron-sulfur cluster assembly protein CyaY (103 aa).

Belongs to the frataxin family.

Functionally, involved in iron-sulfur (Fe-S) cluster assembly. May act as a regulator of Fe-S biogenesis. The protein is Iron-sulfur cluster assembly protein CyaY of Rickettsia africae (strain ESF-5).